The following is a 336-amino-acid chain: N-((2S)-2-amino-2-carboxyethyl)-L-glutamate dehydrogenase (336 aa).

The active-site Proton donor/acceptor is the lysine 78. The NAD(+) site is built by arginine 122 and lysine 242.

It belongs to the ornithine cyclodeaminase/mu-crystallin family. In terms of assembly, homodimer.

The enzyme catalyses N-[(2S)-2-amino-2-carboxyethyl]-L-glutamate + NAD(+) + H2O = (S)-2,3-diaminopropanoate + 2-oxoglutarate + NADH + H(+). It participates in siderophore biosynthesis. Its function is as follows. Catalyzes the hydrolysis of N-((2S)-2-amino-2-carboxyethyl)-L-glutamate (ACEGA) to form L-2,3-diaminopropionic acid and 2-oxoglutarate. Involved in the biosynthesis of L-2,3-diaminopropionic acid (L-Dap), a precursor of staphyloferrin B and antibiotics. The sequence is that of N-((2S)-2-amino-2-carboxyethyl)-L-glutamate dehydrogenase from Staphylococcus aureus (strain NCTC 8325 / PS 47).